The chain runs to 273 residues: Kit ligand (273 aa).

The N-terminal stretch at 1–25 (MKKTQTWILTCIYLQLLLFNPLVKT) is a signal peptide. The Extracellular segment spans residues 26–214 (EGICRNRVTN…KNPPGDSSLH (189 aa)). Disulfide bonds link Cys-29/Cys-114 and Cys-68/Cys-163. Asn-90 and Asn-118 each carry an N-linked (GlcNAc...) asparagine; partial glycan. Asn-145 carries an N-linked (GlcNAc...) asparagine glycan. Ser-167 is a glycosylation site (O-linked (GalNAc...) serine). Residues Thr-168 and Thr-180 are each glycosylated (O-linked (GalNAc...) threonine). A glycan (N-linked (GlcNAc...) asparagine) is linked at Asn-195. Residues 215–237 (WAAMALPALFSLIIGFAFGALYW) form a helical membrane-spanning segment. Residues 238-273 (KKRQPSLTRAVENIQINEEDNEISMLQEKEREFQEV) are Cytoplasmic-facing.

Belongs to the SCF family. Homodimer, non-covalently linked. Heterotetramer with KIT, binding two KIT molecules; thereby mediates KIT dimerization and subsequent activation by autophosphorylation. In terms of processing, a soluble form (sKITLG) is produced by proteolytic processing of isoform 1 in the extracellular domain. Found in two differentially glycosylated forms, LMW-SCF and HMW-SCF. LMW-SCF is fully N-glycosylated at Asn-145, partially N-glycosylated at Asn-90, O-glycosylated at Ser-167, Thr-168 and Thr-180, and not glycosylated at Asn-97 or Asn-118. HMW-SCF is N-glycosylated at Asn-118, Asn-90 and Asn-145, O-glycosylated at Ser-167, Thr-168 and Thr-180, and not glycosylated at Asn-97. Post-translationally, a soluble form exists as a cleavage product of the extracellular domain.

It localises to the cell membrane. The protein resides in the cytoplasm. The protein localises to the cytoskeleton. Its subcellular location is the cell projection. It is found in the lamellipodium. It localises to the filopodium. The protein resides in the secreted. Its function is as follows. Ligand for the receptor-type protein-tyrosine kinase KIT. Plays an essential role in the regulation of cell survival and proliferation, hematopoiesis, stem cell maintenance, gametogenesis, mast cell development, migration and function, and in melanogenesis. KITLG/SCF binding can activate several signaling pathways. Promotes phosphorylation of PIK3R1, the regulatory subunit of phosphatidylinositol 3-kinase, and subsequent activation of the kinase AKT1. KITLG/SCF and KIT also transmit signals via GRB2 and activation of RAS, RAF1 and the MAP kinases MAPK1/ERK2 and/or MAPK3/ERK1. KITLG/SCF and KIT promote activation of STAT family members STAT1, STAT3 and STAT5. KITLG/SCF and KIT promote activation of PLCG1, leading to the production of the cellular signaling molecules diacylglycerol and inositol 1,4,5-trisphosphate. KITLG/SCF acts synergistically with other cytokines, probably interleukins. This chain is Kit ligand, found in Homo sapiens (Human).